The following is a 138-amino-acid chain: Extracellular glycoprotein lacritin (138 aa).

A signal peptide spans 1–19; the sequence is MKFTTLLFLAAVAGALVYA. Residues 20–79 are disordered; that stretch reads EDASSDSTGADPAQEAGTSKPNEEISGPAEPASPPETTTTAQETSAAAVQGTAKVTSSRQ. Over residues 43 to 67 the composition is skewed to low complexity; that stretch reads EISGPAEPASPPETTTTAQETSAAA. N-linked (GlcNAc...) asparagine glycosylation is present at N119.

As to expression, expressed in secretory granules of many acinar cells in lacrimal gland and in scattered acinar cells of salivary glands.

The protein localises to the secreted. In terms of biological role, modulates secretion by lacrimal acinar cells. This Homo sapiens (Human) protein is Extracellular glycoprotein lacritin (LACRT).